The primary structure comprises 151 residues: Small ribosomal subunit protein bS6 (151 aa).

Residues 96-151 (HEEGQSAMLTRRDDRRERDGDDRPRRREGGFDRGDRGDRGDRGPRRPRDNEAGEGA) form a disordered region.

Belongs to the bacterial ribosomal protein bS6 family.

Binds together with bS18 to 16S ribosomal RNA. The sequence is that of Small ribosomal subunit protein bS6 from Brucella anthropi (strain ATCC 49188 / DSM 6882 / CCUG 24695 / JCM 21032 / LMG 3331 / NBRC 15819 / NCTC 12168 / Alc 37) (Ochrobactrum anthropi).